The following is a 576-amino-acid chain: Arginine--tRNA ligase (576 aa).

The short motif at 126 to 136 is the 'HIGH' region element; that stretch reads ANPTGPMHIGH.

It belongs to the class-I aminoacyl-tRNA synthetase family. Monomer.

The protein resides in the cytoplasm. The enzyme catalyses tRNA(Arg) + L-arginine + ATP = L-arginyl-tRNA(Arg) + AMP + diphosphate. The sequence is that of Arginine--tRNA ligase (argS) from Rickettsia prowazekii (strain Madrid E).